Reading from the N-terminus, the 313-residue chain is Pyrimidine-specific ribonucleoside hydrolase RihB (313 aa).

D11 functions as the Proton acceptor in the catalytic mechanism. Positions 11, 16, and 124 each coordinate Ca(2+). Substrate-binding residues include Q227 and H239. D240 lines the Ca(2+) pocket.

This sequence belongs to the IUNH family. RihB subfamily. As to quaternary structure, homotetramer. Requires Ca(2+) as cofactor.

It catalyses the reaction a pyrimidine ribonucleoside + H2O = a pyrimidine nucleobase + D-ribose. Its function is as follows. Hydrolyzes cytidine or uridine to ribose and cytosine or uracil, respectively. Has a clear preference for cytidine over uridine. Strictly specific for ribonucleosides. This is Pyrimidine-specific ribonucleoside hydrolase RihB from Shigella sonnei (strain Ss046).